The following is a 237-amino-acid chain: Ras-related protein Rab-33A (237 aa).

Residues Asn-46, Val-47, Gly-48, Lys-49, Thr-50, Cys-51, Thr-65, and Thr-68 each contribute to the GTP site. Thr-50 provides a ligand contact to Mg(2+). Positions 59 to 71 match the Switch 1 motif; sequence GTFPDKTEATIGV. Residues Thr-68 and Asp-91 each contribute to the Mg(2+) site. The short motif at 92–111 is the Switch 2 element; the sequence is TAGQERFRKSMVEHYYRNVH. 6 residues coordinate GTP: Gly-94, Asn-151, Lys-152, Asp-154, Ala-182, and Lys-183. S-geranylgeranyl cysteine attachment occurs at residues Cys-235 and Cys-237. Cys-237 carries the cysteine methyl ester modification.

The protein belongs to the small GTPase superfamily. Rab family. Interacts with ATG16L1; the interaction is important for autophagosome formation. Mg(2+) serves as cofactor. In terms of tissue distribution, expressed predominantly in brain. Weak expression in ovary.

The protein resides in the cell membrane. It carries out the reaction GTP + H2O = GDP + phosphate + H(+). With respect to regulation, regulated by guanine nucleotide exchange factors (GEFs) which promote the exchange of bound GDP for free GTP. Regulated by GTPase activating proteins (GAPs) which increase the GTP hydrolysis activity. Inhibited by GDP dissociation inhibitors (GDIs). Functionally, the small GTPases Rab are key regulators of intracellular membrane trafficking, from the formation of transport vesicles to their fusion with membranes. Rabs cycle between an inactive GDP-bound form and an active GTP-bound form that is able to recruit to membranes different sets of downstream effectors directly responsible for vesicle formation, movement, tethering and fusion. Modulates autophagosome formation through interaction with ATG16L1. This is Ras-related protein Rab-33A from Mus musculus (Mouse).